The following is an 806-amino-acid chain: Sperm head and tail associated protein (806 aa).

Disordered regions lie at residues 1 to 36 (MNSSPPFLLKISAPSTSPQADCPNNYSFPPESPSSC), 257 to 329 (TPAS…MSGS), 428 to 496 (LNNQ…CPQP), and 707 to 806 (SQIN…SKKK). Residues 13-27 (APSTSPQADCPNNYS) are compositionally biased toward polar residues. The segment covering 277–290 (PPLSSASSPPSGNP) has biased composition (low complexity). Over residues 320-329 (LSSQAGMSGS) the composition is skewed to polar residues. The interaction with CRISP2 stretch occupies residues 521-806 (KEPPPETAVL…QIKSPHSKKK (286 aa)). Composition is skewed to low complexity over residues 710–723 (NHQNKSQSPNKNSS) and 733–754 (RRGAFQSRSRSRSSSPLQSSTQ). Polar residues predominate over residues 773–788 (QSQSPADGKIESQSKS).

In terms of assembly, interacts with CRISP2. As to expression, isoforms 3 and 4 are expressed in testis (at protein level).

The protein localises to the cytoplasm. Its function is as follows. Plays a role during spermatogenesis. In Mus musculus (Mouse), this protein is Sperm head and tail associated protein (Nsun4).